A 557-amino-acid chain; its full sequence is Anthrax toxin receptor-like (557 aa).

An N-terminal signal peptide occupies residues 1–25 (MRSHGRWGPCFLLFLLLLPPPLFRA). Topologically, residues 26–345 (GSLRYHGPGW…KSNVSVTSST (320 aa)) are extracellular. A VWFA domain is found at 74 to 244 (DLYFILDKSG…KAMRDTVDAL (171 aa)). 3 residues coordinate a divalent metal cation: Ser-82, Ser-84, and Thr-148. Residues 346 to 366 (CGIFSNWLYFLLPLLLLPLLL) traverse the membrane as a helical segment. At 367 to 557 (CCLWRLCRKK…PTSKAPNTQD (191 aa)) the chain is on the cytoplasmic side. Disordered regions lie at residues 380-411 (EPPPVQKPEKEPEQEKPPPPPPPSPPPPLPPP) and 497-557 (ESPS…NTQD). Over residues 386–395 (KPEKEPEQEK) the composition is skewed to basic and acidic residues. Positions 396–411 (PPPPPPPSPPPPLPPP) are enriched in pro residues. The segment covering 534-557 (GTLQNPLCPSLPRSPTSKAPNTQD) has biased composition (polar residues).

The protein belongs to the ATR family.

The protein localises to the membrane. This is Anthrax toxin receptor-like (ANTXRL) from Macaca fascicularis (Crab-eating macaque).